The chain runs to 410 residues: Platelet-activating factor acetylhydrolase IB subunit alpha (410 aa).

A required for self-association and interaction with PAFAH1B2 and PAFAH1B3 region spans residues 1–38 (MVLSQRQRDELNRAIADYLRSNGYEEAYSVFKKEAELD). An interaction with NDE1 region spans residues 1-66 (MVLSQRQRDE…SVIRLQKKVM (66 aa)). Residues 1-102 (MVLSQRQRDE…EWIPRPPEKY (102 aa)) are interaction with NDEL1. One can recognise a LisH domain in the interval 7 to 39 (QRDELNRAIADYLRSNGYEEAYSVFKKEAELDM). Lys53 is subject to N6-acetyllysine. Residues 56-82 (TSVIRLQKKVMELESKLNEAKEEFTSG) are a coiled coil. The interaction with dynein and dynactin stretch occupies residues 83–410 (GPLGQKRDPK…DQTVKVWECR (328 aa)). 7 WD repeats span residues 106 to 147 (GHRS…RTLK), 148 to 187 (GHTDSVQDISFDHSGKLLASCSADMTIKLWDFQGFECIRT), 190 to 229 (GHDHNVSSVAIMPNGDHIVSASRDKTIKMWEVQTGYCVKT), 232 to 271 (GHREWVRMVRPNQDGTLIASCSNDQTVRVWVVATKECKAE), 274 to 333 (EHEH…CLMT), 336 to 377 (GHDN…KTLN), and 379 to 410 (HEHFVTSLDFHKTAPYVVTGFVDQTVKVWECR). Ser109 bears the Phosphoserine mark. The segment at 367-409 (YKNKRCMKTLNAHEHFVTSLDFHKTAPYVVTGFVDQTVKVWEC) is interaction with DCX. Positions 388–410 (FHKTAPYVVTGFVDQTVKVWECR) are interaction with NDEL1.

It belongs to the WD repeat LIS1/nudF family. Can self-associate. Component of the cytosolic PAF-AH (I) heterotetrameric enzyme, which is composed of PAFAH1B1 (beta), PAFAH1B2 (alpha2) and PAFAH1B3 (alpha1) subunits. The catalytic activity of the enzyme resides in the alpha1 (PAFAH1B3) and alpha2 (PAFAH1B2) subunits, whereas the beta subunit (PAFAH1B1) has regulatory activity. Trimer formation is not essential for the catalytic activity. Interacts with the catalytic dimer of PAF-AH (I) heterotetrameric enzyme: interacts with PAFAH1B2 homodimer (alpha2/alpha2 homodimer), PAFAH1B3 homodimer (alpha1/alpha1 homodimer) and PAFAH1B2-PAFAH1B3 heterodimer (alpha2/alpha1 heterodimer). Interacts with DCX, dynein, dynactin, IQGAP1, KATNB1, NDE1, NDEL1, NUDC and RSN. Interacts with DISC1, and this interaction is enhanced by NDEL1. Interacts with DAB1 when DAB1 is phosphorylated in response to RELN/reelin signaling. Interacts with INTS13. Interacts with DCDC1.

The protein resides in the cytoplasm. It is found in the cytoskeleton. The protein localises to the microtubule organizing center. It localises to the centrosome. Its subcellular location is the spindle. The protein resides in the nucleus membrane. Functionally, regulatory subunit (beta subunit) of the cytosolic type I platelet-activating factor (PAF) acetylhydrolase (PAF-AH (I)), an enzyme that catalyzes the hydrolyze of the acetyl group at the sn-2 position of PAF and its analogs and participates in PAF inactivation. Regulates the PAF-AH (I) activity in a catalytic dimer composition-dependent manner. Positively regulates the activity of the minus-end directed microtubule motor protein dynein. May enhance dynein-mediated microtubule sliding by targeting dynein to the microtubule plus end. Required for several dynein- and microtubule-dependent processes such as the maintenance of Golgi integrity, the peripheral transport of microtubule fragments and the coupling of the nucleus and centrosome. Required during brain development for the proliferation of neuronal precursors and the migration of newly formed neurons from the ventricular/subventricular zone toward the cortical plate. Neuronal migration involves a process called nucleokinesis, whereby migrating cells extend an anterior process into which the nucleus subsequently translocates. During nucleokinesis dynein at the nuclear surface may translocate the nucleus towards the centrosome by exerting force on centrosomal microtubules. Also required for proper activation of Rho GTPases and actin polymerization at the leading edge of locomoting cerebellar neurons and postmigratory hippocampal neurons in response to calcium influx triggered via NMDA receptors. May also play a role in other forms of cell locomotion including the migration of fibroblasts during wound healing. Required for dynein recruitment to microtubule plus ends and BICD2-bound cargos. May modulate the Reelin pathway through interaction of the PAF-AH (I) catalytic dimer with VLDLR. The protein is Platelet-activating factor acetylhydrolase IB subunit alpha of Pan troglodytes (Chimpanzee).